Consider the following 363-residue polypeptide: Crh-like protein 3 (363 aa).

The signal sequence occupies residues 1–19; the sequence is MSLLYLVALFVASICSVTA. The cysteines at positions 25 and 32 are disulfide-linked. In terms of domain architecture, GH16 spans 26–237; the sequence is NPLTTTCPPD…YSKAPFTMVL (212 aa). 3 N-linked (GlcNAc...) asparagine glycosylation sites follow: Asn41, Asn47, and Asn56. The active-site Nucleophile is the Glu118. The Proton donor role is filled by Glu122. Glu122 serves as a coordination point for chitin. N-linked (GlcNAc...) asparagine glycosylation is found at Asn127, Asn141, and Asn161. The chitin site is built by Arg203, Trp207, and Thr218. Asn252 and Asn269 each carry an N-linked (GlcNAc...) asparagine glycan. Residues 298–318 form a helical membrane-spanning segment; sequence VYIGAGCVGAALLAGFIFFFI.

Belongs to the glycosyl hydrolase 16 family. CRH1 subfamily. In terms of processing, the GPI-like anchor contains a phosphoceramide lipid group. The anchor position has not been determined.

The protein resides in the cell membrane. It localises to the secreted. Its subcellular location is the cell wall. The enzyme catalyses Random endo-hydrolysis of N-acetyl-beta-D-glucosaminide (1-&gt;4)-beta-linkages in chitin and chitodextrins.. Dual chitinase/transglycosylase that plays a role in cell wall architecture. Chitinase and transglycosylase activities are coupled. Required for the polysaccharide cross-linking at the septa and the cell wall. More specifically, transfers chitin to 1,6-beta-glucan in the cell wall. The polypeptide is Crh-like protein 3 (Aspergillus fumigatus (strain ATCC MYA-4609 / CBS 101355 / FGSC A1100 / Af293) (Neosartorya fumigata)).